The following is a 579-amino-acid chain: Type II restriction enzyme FokI (579 aa).

Residues Asp-450, Asp-467, and Lys-469 contribute to the active site.

In terms of assembly, monomer, in which form it can cleave DNA. Homodimer when bound to DNA. Mg(2+) serves as cofactor.

The catalysed reaction is Endonucleolytic cleavage of DNA to give specific double-stranded fragments with terminal 5'-phosphates.. Functionally, an S subtype restriction enzyme that recognizes the asymmetric double-stranded sequence 5'-GGATG-3' and cleaves respectively 14 bases after G-1 (top strand) and 13 bases before C-1 (bottom strand). This is Type II restriction enzyme FokI from Planomicrobium okeanokoites (Planococcus okeanokoites).